The chain runs to 243 residues: Probable transcriptional regulatory protein Bpet3099 (243 aa).

The segment at 1-21 is disordered; sequence MAGHSKWANIQHRKGRQDAKR.

It belongs to the TACO1 family.

The protein resides in the cytoplasm. In Bordetella petrii (strain ATCC BAA-461 / DSM 12804 / CCUG 43448), this protein is Probable transcriptional regulatory protein Bpet3099.